Here is a 61-residue protein sequence, read N- to C-terminus: Small ribosomal subunit protein uS14B (61 aa).

Zn(2+) is bound by residues C24, C27, C40, and C43.

It belongs to the universal ribosomal protein uS14 family. Zinc-binding uS14 subfamily. As to quaternary structure, part of the 30S ribosomal subunit. Contacts proteins S3 and S10. It depends on Zn(2+) as a cofactor.

Functionally, binds 16S rRNA, required for the assembly of 30S particles and may also be responsible for determining the conformation of the 16S rRNA at the A site. In Rhodococcus jostii (strain RHA1), this protein is Small ribosomal subunit protein uS14B.